The sequence spans 33 residues: Photosystem II reaction center protein Psb30 (33 aa).

A helical membrane pass occupies residues 5 to 25; it reads LITQLASLILIVASGPIVIGL.

It belongs to the Psb30/Ycf12 family. As to quaternary structure, PSII is composed of 1 copy each of membrane proteins PsbA, PsbB, PsbC, PsbD, PsbE, PsbF, PsbH, PsbI, PsbJ, PsbK, PsbL, PsbM, PsbT, PsbX, PsbY, PsbZ, Psb30/Ycf12, peripheral proteins of the oxygen-evolving complex and a large number of cofactors. It forms dimeric complexes.

The protein localises to the plastid. The protein resides in the chloroplast thylakoid membrane. In terms of biological role, a core subunit of photosystem II (PSII), probably helps stabilize the reaction center. This Lepocinclis buetschlii protein is Photosystem II reaction center protein Psb30.